A 471-amino-acid chain; its full sequence is Rho GTPase-activating protein 15 (471 aa).

The tract at residues M1–G20 is disordered. Phosphoserine is present on S43. Residues M79–D189 form the PH domain. A phosphoserine mark is found at S196, S199, and S243. Positions S281–F470 constitute a Rho-GAP domain.

The protein localises to the cytoplasm. It is found in the membrane. GTPase activator for the Rho-type GTPases by converting them to an inactive GDP-bound state. Has activity toward RAC1. Overexpression results in an increase in actin stress fibers and cell contraction. In Bos taurus (Bovine), this protein is Rho GTPase-activating protein 15 (ARHGAP15).